Here is a 397-residue protein sequence, read N- to C-terminus: Argininosuccinate synthase (397 aa).

Position 9-17 (9-17) interacts with ATP; it reads AYSGGLDTS. Position 85 (Tyr-85) interacts with L-citrulline. Gly-115 contacts ATP. L-aspartate contacts are provided by Thr-117, Asn-121, and Asp-122. An L-citrulline-binding site is contributed by Asn-121. The L-citrulline site is built by Arg-125, Ser-173, Glu-258, and Tyr-270.

This sequence belongs to the argininosuccinate synthase family. Type 1 subfamily. In terms of assembly, homotetramer.

The protein resides in the cytoplasm. It catalyses the reaction L-citrulline + L-aspartate + ATP = 2-(N(omega)-L-arginino)succinate + AMP + diphosphate + H(+). It functions in the pathway amino-acid biosynthesis; L-arginine biosynthesis; L-arginine from L-ornithine and carbamoyl phosphate: step 2/3. The protein is Argininosuccinate synthase of Streptococcus suis (strain 05ZYH33).